The primary structure comprises 283 residues: Quinate/shikimate dehydrogenase (NAD(+)) (283 aa).

The shikimate site is built by S17, T69, K73, N94, and D110. L-quinate contacts are provided by residues 17–19, T69, K73, N94, and D110; that span reads SRT. The active-site Proton acceptor is K73. NAD(+)-binding positions include 137 to 138, D158, R163, 203 to 206, A213, V228, and G251; these read GV and PMGM. Q258 serves as a coordination point for shikimate. Q258 is a binding site for L-quinate.

It belongs to the shikimate dehydrogenase family. In terms of assembly, homodimer.

The enzyme catalyses L-quinate + NAD(+) = 3-dehydroquinate + NADH + H(+). It catalyses the reaction shikimate + NAD(+) = 3-dehydroshikimate + NADH + H(+). Its pathway is metabolic intermediate biosynthesis; chorismate biosynthesis; chorismate from D-erythrose 4-phosphate and phosphoenolpyruvate: step 4/7. The protein operates within aromatic compound metabolism; 3,4-dihydroxybenzoate biosynthesis; 3-dehydroquinate from D-quinate (NAD(+) route). Its function is as follows. Involved in the biosynthesis of the chorismate, which leads to the biosynthesis of aromatic amino acids, and plays a key role in the quinate degradation pathway. Catalyzes the NAD(+)-dependent oxidation of both quinate and shikimate to 3-dehydroquinate and 3-dehydroshikimate, respectively. It can only use NAD. In Corynebacterium glutamicum (strain ATCC 13032 / DSM 20300 / JCM 1318 / BCRC 11384 / CCUG 27702 / LMG 3730 / NBRC 12168 / NCIMB 10025 / NRRL B-2784 / 534), this protein is Quinate/shikimate dehydrogenase (NAD(+)).